The sequence spans 20 residues: Antimicrobial peptide EP-20 (20 aa).

A disordered region spans residues 1–20; it reads EGPVGLADPDGPASAPLGAP.

It is found in the secreted. Its function is as follows. The synthetic peptide inhibits growth of fungus P.capsici and partially that of V.dahliae, F.graminearum and F.omysporum. This Xenorhabdus budapestensis protein is Antimicrobial peptide EP-20.